A 411-amino-acid polypeptide reads, in one-letter code: Adherens junction-associated protein 1 (411 aa).

Residues 1-43 form the signal peptide; it reads MWIQQLLGLSSMPIRWPGRSLGSHLWILIAMLQLAVDFPSCDS. At 44–283 the chain is on the extracellular side; it reads LGPGPEFRLL…GETSGLAVHQ (240 aa). 3 stretches are compositionally biased toward low complexity: residues 62–76, 121–145, and 247–264; these read LWSL…LPTP, PPAA…AGAA, and TPVG…SNNG. Disordered regions lie at residues 62-156 and 242-270; these read LWSL…RGRR and DPWK…IQPP. A helical membrane pass occupies residues 284 to 304; that stretch reads IITITVSLIMVIAALITTLVL. The tract at residues 304–411 is targeting signals; sequence LKNCCAPSGH…VSEKWFEISC (108 aa). The Cytoplasmic portion of the chain corresponds to 305 to 411; it reads KNCCAPSGHT…VSEKWFEISC (107 aa).

In terms of assembly, forms a complex with CDH1 and CTNNB1; interacts directly with CTNNB1. Interacts with AP1M2 and with isoform 2 of BSG/CD147.

It localises to the basolateral cell membrane. It is found in the apical cell membrane. Its subcellular location is the cell junction. The protein localises to the adherens junction. Its function is as follows. Plays a role in cell adhesion and cell migration. The protein is Adherens junction-associated protein 1 (Ajap1) of Rattus norvegicus (Rat).